Here is a 268-residue protein sequence, read N- to C-terminus: 14-3-3-like protein GF14 iota (268 aa).

A phosphoserine mark is found at Ser70 and Ser193. Thr214 carries the post-translational modification Phosphothreonine. Positions 240 to 268 are disordered; that stretch reads DLPEDGGEDNIKTEESKQEQAKPADATEN. Residues 248–261 show a composition bias toward basic and acidic residues; the sequence is DNIKTEESKQEQAK.

The protein belongs to the 14-3-3 family. Expressed in flowers.

The protein resides in the nucleus. Its subcellular location is the cytoplasm. Is associated with a DNA binding complex that binds to the G box, a well-characterized cis-acting DNA regulatory element found in plant genes. This is 14-3-3-like protein GF14 iota from Arabidopsis thaliana (Mouse-ear cress).